Consider the following 454-residue polypeptide: Histidine--tRNA ligase (454 aa).

Residues 434–454 (ADAGAWNPPTEDLHPGVIGTW) form a disordered region.

This sequence belongs to the class-II aminoacyl-tRNA synthetase family. Homodimer.

The protein localises to the cytoplasm. The enzyme catalyses tRNA(His) + L-histidine + ATP = L-histidyl-tRNA(His) + AMP + diphosphate + H(+). The sequence is that of Histidine--tRNA ligase (hisS) from Cutibacterium acnes (strain DSM 16379 / KPA171202) (Propionibacterium acnes).